The following is a 155-amino-acid chain: Riboflavin kinase (155 aa).

Residues G15, K21, T27, and N29 each coordinate ATP. Mg(2+)-binding residues include T27 and N29. E79 (nucleophile) is an active-site residue. Positions 82, 84, and 91 each coordinate ATP. Residues R104, K107, and F109 each contribute to the FMN site.

As to quaternary structure, monomer. Directly interacts with TNFRSF1A death domain; this interaction may be supported by TRADD. In the absence of TNFRSF1A, interacts with TRADD. Independently of TNFRSF1A, interacts with the NADPH oxidase subunit CYBA. It depends on Zn(2+) as a cofactor. Mg(2+) serves as cofactor.

The protein resides in the cytoplasm. The catalysed reaction is riboflavin + ATP = FMN + ADP + H(+). The protein operates within cofactor biosynthesis; FMN biosynthesis; FMN from riboflavin (ATP route): step 1/1. Its function is as follows. Catalyzes the phosphorylation of riboflavin (vitamin B2) to form flavin-mononucleotide (FMN), hence rate-limiting enzyme in the synthesis of FAD. Essential for TNF-induced reactive oxygen species (ROS) production. Through its interaction with both TNFRSF1A and CYBA, physically and functionally couples TNFRSF1A to NADPH oxidase. TNF-activation of RFK may enhance the incorporation of FAD in NADPH oxidase, a critical step for the assembly and activation of NADPH oxidase. In Mus musculus (Mouse), this protein is Riboflavin kinase (Rfk).